Here is a 428-residue protein sequence, read N- to C-terminus: Serine hydroxymethyltransferase (428 aa).

Residues L117 and 121 to 123 (GHL) each bind (6S)-5,6,7,8-tetrahydrofolate. N6-(pyridoxal phosphate)lysine is present on K226.

The protein belongs to the SHMT family. In terms of assembly, homodimer. Requires pyridoxal 5'-phosphate as cofactor.

It is found in the cytoplasm. It catalyses the reaction (6R)-5,10-methylene-5,6,7,8-tetrahydrofolate + glycine + H2O = (6S)-5,6,7,8-tetrahydrofolate + L-serine. It functions in the pathway one-carbon metabolism; tetrahydrofolate interconversion. Its pathway is amino-acid biosynthesis; glycine biosynthesis; glycine from L-serine: step 1/1. Functionally, catalyzes the reversible interconversion of serine and glycine with tetrahydrofolate (THF) serving as the one-carbon carrier. This reaction serves as the major source of one-carbon groups required for the biosynthesis of purines, thymidylate, methionine, and other important biomolecules. Also exhibits THF-independent aldolase activity toward beta-hydroxyamino acids, producing glycine and aldehydes, via a retro-aldol mechanism. This is Serine hydroxymethyltransferase from Aquifex aeolicus (strain VF5).